We begin with the raw amino-acid sequence, 753 residues long: Putative cyclic nucleotide-gated ion channel 8 (753 aa).

At 1–111 (MYKSQYISGH…DKTLLLWNRM (111 aa)) the chain is on the cytoplasmic side. Residues 112–132 (FVISCILAVSVDPLFFYLPIV) form a helical membrane-spanning segment. The Extracellular segment spans residues 133–145 (DNSKNCIGIDSKL). Residues 146–166 (AVTTTTLRTIIDVFYLTRMAL) form a helical membrane-spanning segment. The Cytoplasmic portion of the chain corresponds to 167-199 (QFRTAYIAPSSRVFGRGELVIDPAKIAERYLTR). A helical transmembrane segment spans residues 200-220 (YFIVDFLAVLPLPQIAVWKFL). The Extracellular portion of the chain corresponds to 221 to 233 (HGSKGTDVLPTKQ). The chain crosses the membrane as a helical span at residues 234–254 (ALLHIVITQYIPRFVRFIPLT). Over 255–274 (SELKKTAGAFAEGAWAGAAY) the chain is Cytoplasmic. The helical transmembrane segment at 275–295 (YLLWYMLASHITGAFWYMLSV) threads the bilayer. Topologically, residues 296-402 (ERNDTCLRSA…QGLQTSTYPG (107 aa)) are extracellular. A helical membrane pass occupies residues 403 to 423 (EVLFSIAIAVAGLLLFALLIG). Residues 424–753 (NMQTYLQSLT…FEALDTDDLN (330 aa)) lie on the Cytoplasmic side of the membrane. Residues 508–638 (LFAN…TFRF) and E579 contribute to the a nucleoside 3',5'-cyclic phosphate site. The segment at 624–639 (FRRLHSRQVQQTFRFY) is calmodulin-binding. Positions 644-673 (RTWAACFIQAAWRRHLRRKIAELRRKEEEE) constitute an IQ domain. Residues 731–753 (KSLMNLTKPSEPDFEALDTDDLN) form a disordered region. Residues 742–753 (PDFEALDTDDLN) show a composition bias toward acidic residues.

It belongs to the cyclic nucleotide-gated cation channel (TC 1.A.1.5) family. As to quaternary structure, homotetramer or heterotetramer.

It is found in the cell membrane. Putative cyclic nucleotide-gated ion channel. This Arabidopsis thaliana (Mouse-ear cress) protein is Putative cyclic nucleotide-gated ion channel 8 (CNGC8).